Reading from the N-terminus, the 95-residue chain is Small ribosomal subunit protein uS19 (95 aa).

This sequence belongs to the universal ribosomal protein uS19 family.

Functionally, protein S19 forms a complex with S13 that binds strongly to the 16S ribosomal RNA. In Clostridium kluyveri (strain NBRC 12016), this protein is Small ribosomal subunit protein uS19.